The primary structure comprises 641 residues: SUMO-activating enzyme subunit 2-A (641 aa).

ATP is bound by residues 24–29 (GAGGIG), Asp-48, 56–59 (NLNR), Lys-72, 95–96 (SI), and 117–122 (DNNAAR). Cys-158 and Cys-161 together coordinate Zn(2+). Catalysis depends on Cys-173, which acts as the Glycyl thioester intermediate. Positions 439 and 442 each coordinate Zn(2+). The segment at 546 to 641 (GDVPEKGPQK…EEDDDIIALD (96 aa)) is disordered. Over residues 548 to 561 (VPEKGPQKPPEESV) the composition is skewed to basic and acidic residues. A compositionally biased stretch (polar residues) spans 562 to 579 (KNITNGSDDGAQPSTSKA). Composition is skewed to acidic residues over residues 582-594 (QDDV…DEES) and 630-641 (PVEEDDDIIALD).

The protein belongs to the ubiquitin-activating E1 family. In terms of assembly, heterodimer of sae1 and uba2/sae2. The heterodimer corresponds to the two domains that are encoded on a single polypeptide chain in ubiquitin-activating enzyme E1. Interacts with ube2i.

The protein resides in the nucleus. It participates in protein modification; protein sumoylation. Its function is as follows. The heterodimer acts as an E1 ligase for sumo1, sumo2, and sumo3. It mediates ATP-dependent activation of sumo proteins followed by formation of a thioester bond between a sumo protein and a conserved active site cysteine residue on uba2/sae2. The polypeptide is SUMO-activating enzyme subunit 2-A (uba2-a) (Xenopus laevis (African clawed frog)).